The following is a 239-amino-acid chain: Transcriptional regulatory protein BtsR (239 aa).

A Response regulatory domain is found at 3-116; it reads KVLIVDDEPL…RLEKTLHRLR (114 aa). Residue aspartate 54 is modified to 4-aspartylphosphate. Residues 137–239 enclose the HTH LytTR-type domain; it reads IPCTGHSRIY…LKSLKEAIGL (103 aa).

Post-translationally, phosphorylated by BtsS.

In terms of biological role, member of the two-component regulatory system BtsS/BtsR. BtsR regulates expression of btsT by binding to its promoter region. The polypeptide is Transcriptional regulatory protein BtsR (Salmonella typhimurium (strain LT2 / SGSC1412 / ATCC 700720)).